The primary structure comprises 434 residues: Alpha-enolase (434 aa).

S40 serves as a coordination point for Mg(2+). Residues H158 and E167 each coordinate substrate. Residue E210 is the Proton donor of the active site. The Mg(2+) site is built by D245, E293, and D318. 2 residues coordinate substrate: E293 and D318. The active-site Proton acceptor is K343. Residues 370–373 (SHRS) and K394 contribute to the substrate site.

This sequence belongs to the enolase family. In terms of assembly, homodimer. Mg(2+) serves as cofactor.

It localises to the cytoplasm. It catalyses the reaction (2R)-2-phosphoglycerate = phosphoenolpyruvate + H2O. It participates in carbohydrate degradation; glycolysis; pyruvate from D-glyceraldehyde 3-phosphate: step 4/5. In Alligator mississippiensis (American alligator), this protein is Alpha-enolase.